A 320-amino-acid chain; its full sequence is Putative protein FRMPD2-like (320 aa).

PDZ domains follow at residues Met-1–Val-46 and Glu-90–Pro-178. The tract at residues Asp-215–Ser-239 is disordered.

This chain is Putative protein FRMPD2-like, found in Homo sapiens (Human).